The following is a 1997-amino-acid chain: Otoferlin (1997 aa).

Residues 1–98 (MALIVHLKTV…VEENRVEVTD (98 aa)) form the C2 1 domain. Topologically, residues 1-1963 (MALIVHLKTV…ARYFLWHTYR (1963 aa)) are cytoplasmic. The interval 140–167 (QEEKDSQETDGLLPGSRPSTRISGEKSF) is disordered. 2 consecutive C2 domains span residues 235 to 356 (KRSK…HKWA) and 399 to 530 (IEGN…FLPT). Positions 643-692 (VDGMSRPLRPRPRKEPGDEEEVDLIQNSSDDEGDEAGDLASVSSTPPMRP) are disordered. Positions 659-679 (GDEEEVDLIQNSSDDEGDEAG) are enriched in acidic residues. Residues 791 to 820 (RERLKSCMRELESMGQQAKSLRAQVKRHTV) are a coiled coil. 2 C2 domains span residues 943-1068 (LHSF…PPRF) and 1115-1241 (RGPI…PNWN). Positions 975, 981, 1037, 1039, and 1045 each coordinate Ca(2+). Disordered stretches follow at residues 1253 to 1272 (LRNG…SMEP), 1296 to 1326 (DVAE…ESML), and 1343 to 1402 (LRQH…EKKK). Acidic residues-rich tracts occupy residues 1314–1325 (EEPEEEEPDESM) and 1352–1361 (DLEEKEEMES). Basic and acidic residues predominate over residues 1370–1383 (KSKEKSRAAKEEKK). C2 domains follow at residues 1464–1593 (LPED…ATCG) and 1714–1865 (DMPA…KQCT). 8 residues coordinate Ca(2+): D1508, D1514, D1563, D1565, D1571, D1836, S1839, and D1842. A helical transmembrane segment spans residues 1964–1984 (WLLLKFLLLFLLLLLFALFLY). Residues 1985-1997 (SLPGYLAKKILGA) lie on the Extracellular side of the membrane.

The protein belongs to the ferlin family. Interacts with SNAP25; the interaction is direct. Interacts with STX1; the interaction is direct. Interacts with RAB8B. Ca(2+) is required as a cofactor. As to expression, isoform 1 is expressed in cochlea and brain. Expressed in the cochlear and vestibular hair cells. Expressed in both inner and outer hair cells (IHCs and OHCs) and cochlear ganglions neurons at postnatal day 2 (P2) and 6 (P6). Expressed only in IHCs at postnatal day 60 (P60) (at protein level). Strongly expressed in brain and inner ear. In the inner ear, it is mainly expressed in the cochlear IHC and vestibular type I sensory hair cells. Weakly expressed in eye, heart, skeletal muscle, liver, kidney, lung and testis.

It is found in the cytoplasmic vesicle. The protein resides in the secretory vesicle. The protein localises to the synaptic vesicle membrane. Its subcellular location is the basolateral cell membrane. It localises to the endoplasmic reticulum membrane. It is found in the golgi apparatus membrane. The protein resides in the presynaptic cell membrane. The protein localises to the cell membrane. Key calcium ion sensor involved in the Ca(2+)-triggered synaptic vesicle-plasma membrane fusion and in the control of neurotransmitter release at these output synapses. Interacts in a calcium-dependent manner to the presynaptic SNARE proteins at ribbon synapses of cochlear inner hair cells (IHCs) to trigger exocytosis of neurotransmitter. Also essential to synaptic exocytosis in immature outer hair cells (OHCs). May also play a role within the recycling of endosomes. The protein is Otoferlin (Otof) of Mus musculus (Mouse).